A 319-amino-acid polypeptide reads, in one-letter code: Protein-methionine-sulfoxide reductase catalytic subunit MsrP (319 aa).

Residues 1 to 54 constitute a signal peptide (tat-type signal); the sequence is MSSFKPSRFSTARLTGDAVTPKSIYLRRREFMIGLGAIAATGAASSAFADPLEA. Mo-molybdopterin is bound by residues Asn75, 78 to 79, Cys133, Asn218, Arg223, and 234 to 236; these read YE and GIK.

This sequence belongs to the MsrP family. As to quaternary structure, heterodimer of a catalytic subunit (MsrP) and a heme-binding subunit (MsrQ). The cofactor is Mo-molybdopterin. Predicted to be exported by the Tat system. The position of the signal peptide cleavage has not been experimentally proven.

It is found in the periplasm. It catalyses the reaction L-methionyl-[protein] + a quinone + H2O = L-methionyl-(S)-S-oxide-[protein] + a quinol. It carries out the reaction L-methionyl-[protein] + a quinone + H2O = L-methionyl-(R)-S-oxide-[protein] + a quinol. In terms of biological role, part of the MsrPQ system that repairs oxidized periplasmic proteins containing methionine sulfoxide residues (Met-O), using respiratory chain electrons. Thus protects these proteins from oxidative-stress damage caused by reactive species of oxygen and chlorine generated by the host defense mechanisms. MsrPQ is essential for the maintenance of envelope integrity under bleach stress, rescuing a wide series of structurally unrelated periplasmic proteins from methionine oxidation. The catalytic subunit MsrP is non-stereospecific, being able to reduce both (R-) and (S-) diastereoisomers of methionine sulfoxide. In Brucella melitensis biotype 1 (strain ATCC 23456 / CCUG 17765 / NCTC 10094 / 16M), this protein is Protein-methionine-sulfoxide reductase catalytic subunit MsrP.